Consider the following 144-residue polypeptide: Putative pre-16S rRNA nuclease (144 aa).

The protein belongs to the YqgF nuclease family.

It localises to the cytoplasm. In terms of biological role, could be a nuclease involved in processing of the 5'-end of pre-16S rRNA. The chain is Putative pre-16S rRNA nuclease from Oenococcus oeni (strain ATCC BAA-331 / PSU-1).